Here is a 219-residue protein sequence, read N- to C-terminus: Holliday junction branch migration complex subunit RuvA (219 aa).

The domain I stretch occupies residues 1–66 (MIEYIIGKIS…NFLFEYYGFK (66 aa)). The domain II stretch occupies residues 67–148 (TLREKIFFEN…SEYNNDVNHS (82 aa)). The segment at 149–154 (SINQQS) is flexible linker. Residues 155–219 (NSYNPVPDLV…EAVTNKTTVS (65 aa)) are domain III.

This sequence belongs to the RuvA family. Homotetramer. Forms an RuvA(8)-RuvB(12)-Holliday junction (HJ) complex. HJ DNA is sandwiched between 2 RuvA tetramers; dsDNA enters through RuvA and exits via RuvB. An RuvB hexamer assembles on each DNA strand where it exits the tetramer. Each RuvB hexamer is contacted by two RuvA subunits (via domain III) on 2 adjacent RuvB subunits; this complex drives branch migration. In the full resolvosome a probable DNA-RuvA(4)-RuvB(12)-RuvC(2) complex forms which resolves the HJ.

The protein resides in the cytoplasm. Functionally, the RuvA-RuvB-RuvC complex processes Holliday junction (HJ) DNA during genetic recombination and DNA repair, while the RuvA-RuvB complex plays an important role in the rescue of blocked DNA replication forks via replication fork reversal (RFR). RuvA specifically binds to HJ cruciform DNA, conferring on it an open structure. The RuvB hexamer acts as an ATP-dependent pump, pulling dsDNA into and through the RuvAB complex. HJ branch migration allows RuvC to scan DNA until it finds its consensus sequence, where it cleaves and resolves the cruciform DNA. The sequence is that of Holliday junction branch migration complex subunit RuvA from Malacoplasma penetrans (strain HF-2) (Mycoplasma penetrans).